A 135-amino-acid polypeptide reads, in one-letter code: Large ribosomal subunit protein uL18c (135 aa).

The protein belongs to the universal ribosomal protein uL18 family. In terms of assembly, part of the 50S ribosomal subunit; contacts the 5S rRNA.

It localises to the plastid. Its subcellular location is the chloroplast. Its function is as follows. Binds 5S rRNA, forms part of the central protuberance of the 50S subunit. The sequence is that of Large ribosomal subunit protein uL18c (rpl18) from Phaeodactylum tricornutum (strain CCAP 1055/1).